Consider the following 129-residue polypeptide: Putative zinc finger protein 702 (129 aa).

3 C2H2-type zinc fingers span residues 34-56 (YKCDICGKVFNQKRYLAYHHRCH), 62-84 (YKCNQCGKTFSYKSSLVIHKAIH), and 90-112 (HKCNECGKVFNQKAYLASHHRLH).

The protein belongs to the krueppel C2H2-type zinc-finger protein family.

It localises to the nucleus. Its function is as follows. May be involved in transcriptional regulation. The chain is Putative zinc finger protein 702 (ZNF702P) from Homo sapiens (Human).